We begin with the raw amino-acid sequence, 94 residues long: Small ribosomal subunit protein bS18 (94 aa).

Residues 1-12 are compositionally biased toward low complexity; the sequence is MSEQNSRPQNSE. Positions 1-29 are disordered; that stretch reads MSEQNSRPQNSERPQRSRRPQGGPRRRRK. Positions 16–29 are enriched in basic residues; that stretch reads RSRRPQGGPRRRRK.

Belongs to the bacterial ribosomal protein bS18 family. Part of the 30S ribosomal subunit. Forms a tight heterodimer with protein bS6.

Its function is as follows. Binds as a heterodimer with protein bS6 to the central domain of the 16S rRNA, where it helps stabilize the platform of the 30S subunit. The protein is Small ribosomal subunit protein bS18 of Leuconostoc mesenteroides subsp. mesenteroides (strain ATCC 8293 / DSM 20343 / BCRC 11652 / CCM 1803 / JCM 6124 / NCDO 523 / NBRC 100496 / NCIMB 8023 / NCTC 12954 / NRRL B-1118 / 37Y).